A 129-amino-acid chain; its full sequence is Small ribosomal subunit protein uS13 (129 aa).

The segment covering 92 to 114 has biased composition (basic residues); sequence HKHNLPVRGQRTKTNARTRRGPR. Residues 92–129 form a disordered region; sequence HKHNLPVRGQRTKTNARTRRGPRKTVAGRGQKRGATKK.

The protein belongs to the universal ribosomal protein uS13 family. Part of the 30S ribosomal subunit. Forms a loose heterodimer with protein S19. Forms two bridges to the 50S subunit in the 70S ribosome.

Functionally, located at the top of the head of the 30S subunit, it contacts several helices of the 16S rRNA. In the 70S ribosome it contacts the 23S rRNA (bridge B1a) and protein L5 of the 50S subunit (bridge B1b), connecting the 2 subunits; these bridges are implicated in subunit movement. Contacts the tRNAs in the A and P-sites. The sequence is that of Small ribosomal subunit protein uS13 from Dehalococcoides mccartyi (strain ATCC BAA-2266 / KCTC 15142 / 195) (Dehalococcoides ethenogenes (strain 195)).